The sequence spans 579 residues: MNAIVALCHFCELHGPRTLFCTEVLHAPLPQGDGNEDSPGQGEQAEEEEGGIQMNSRMRAHSPAEGASVESSSPGPKKSDMCEGCRSLAAGHPGYISHDKETSIKYVSHQHPSHPQLFSIVRQACVRSLSCEVCPGREGPIFFGDEQHGFVFSHTFFIKDSLARGFQRWYSIITIMMDRIYLINSWPFLLGKVRGIIDELQGKALKVFEAEQFGCPQRAQRMNTAFTPFLHQRNGNAARSLTSLTSDDNLWACLHTSFAWLLKACGSRLTEKLLEGAPTEDTLVQMEKLADLEEESESWDNSEAEEEEKAPVLPESTEGRELTQGPAESSSLSGCGSWQPRKLPVFKSLRHMRQVLGAPSFRMLAWHVLMGNQVIWKSRDVDLVQSAFEVLRTMLPVGCVRIIPYSSQYEEAYRCNFLGLSPHVQIPPHVLSSEFAVIVEVHAAARSTLHPVGCEDDQSLSKYEFVVTSGSPVAADRVGPTILNKIEAALTNQNLSVDVVDQCLVCLKEEWMNKVKVLFKFTKVDSRPKEDTQKLLSILGASEEDNVKLLKFWMTGLSKTYKSHLMSTVRSPTASESRN.

The interval 30–81 (PQGDGNEDSPGQGEQAEEEEGGIQMNSRMRAHSPAEGASVESSSPGPKKSDM) is disordered. Phosphoserine occurs at positions 62 and 73. Positions 86 to 242 (RSLAAGHPGY…RNGNAARSLT (157 aa)) constitute a uDENN FLCN/SMCR8-type domain. Residues 210–220 (AEQFGCPQRAQ) are essential for interaction with LDHA. Residues 287-310 (EKLADLEEESESWDNSEAEEEEKA) adopt a coiled-coil conformation. Positions 294–308 (EESESWDNSEAEEEE) are enriched in acidic residues. The disordered stretch occupies residues 294–337 (EESESWDNSEAEEEEKAPVLPESTEGRELTQGPAESSSLSGCGS). Residue Ser302 is modified to Phosphoserine. A compositionally biased stretch (polar residues) spans 326 to 336 (PAESSSLSGCG). A cDENN FLCN/SMCR8-type domain is found at 339–491 (QPRKLPVFKS…ILNKIEAALT (153 aa)). Phosphoserine; by ULK1 is present on residues Ser406, Ser537, and Ser542. In terms of domain architecture, dDENN FLCN/SMCR8-type spans 493-558 (QNLSVDVVDQ…LLKFWMTGLS (66 aa)). Ser571 bears the Phosphoserine mark.

It belongs to the folliculin family. Interacts (via C-terminus) with FNIP1 or FNIP2 (via C-terminus). Component of the lysosomal folliculin complex (LFC), composed of FLCN, FNIP1 (or FNIP2), RagA/RRAGA or RagB/RRAGB GDP-bound, RagC/RRAGC or RagD/RRAGD GTP-bound, and Ragulator. Interaction with FNIP1 or FNIP2 mediates indirect interaction with the PRKAA1, PRKAB1 and PRKAG1 subunits of 5'-AMP-activated protein kinase (AMPK). Interacts with HSP90AA1 in the presence of FNIP1. Interacts with HSP70, STUB1, CDC37, AHSA1, CCT2, STIP1, PTGES3 and PPP5C. Interacts with GABARAP; interaction takes place in the presence of FNIP1 and/or FNIP2. Interacts with RILP; the interaction is direct and promotes association between RILP and RAB34. Interacts with KIF3A and KIF3B. Interacts with lactate dehydrogenase LDHA, but not LDHB; the interaction is direct, may preferentially bind LDHA dimers rather than tetramers, and regulates LDHA activity, acting as an uncompetitive inhibitor. Phosphorylation by ULK1 modulates the interaction with GABARAP and is required to regulate autophagy. Expressed in most tissues tested, including skin, lung, kidney, heart, testis and stomach.

It localises to the lysosome membrane. The protein localises to the cytoplasm. The protein resides in the cytosol. It is found in the cell projection. Its subcellular location is the cilium. It localises to the cytoskeleton. The protein localises to the microtubule organizing center. The protein resides in the centrosome. It is found in the spindle. Its subcellular location is the nucleus. With respect to regulation, GTPase-activating activity is inhibited in the folliculin complex (LFC), which stabilizes the GDP-bound state of RagA/RRAGA (or RagB/RRAGB), because Arg-164 is located far from the RagC/RRAGC or RagD/RRAGD nucleotide pocket. Disassembly of the LFC complex upon amino acid restimulation liberates the GTPase-activating activity. Multi-functional protein, involved in both the cellular response to amino acid availability and in the regulation of glycolysis. GTPase-activating protein that plays a key role in the cellular response to amino acid availability through regulation of the non-canonical mTORC1 signaling cascade controlling the MiT/TFE factors TFEB and TFE3. Activates mTORC1 by acting as a GTPase-activating protein: specifically stimulates GTP hydrolysis by RagC/RRAGC or RagD/RRAGD, promoting the conversion to the GDP-bound state of RagC/RRAGC or RagD/RRAGD, and thereby activating the kinase activity of mTORC1. The GTPase-activating activity is inhibited during starvation and activated in presence of nutrients. Acts as a key component for non-canonical mTORC1-dependent control of the MiT/TFE factors TFEB and TFE3, while it is not involved in mTORC1-dependent phosphorylation of canonical RPS6KB1/S6K1 and EIF4EBP1/4E-BP1. In low-amino acid conditions, the lysosomal folliculin complex (LFC) is formed on the membrane of lysosomes, which inhibits the GTPase-activating activity of FLCN, inactivates mTORC1 and maximizes nuclear translocation of TFEB and TFE3. Upon amino acid restimulation, RagA/RRAGA (or RagB/RRAGB) nucleotide exchange promotes disassembly of the LFC complex and liberates the GTPase-activating activity of FLCN, leading to activation of mTORC1 and subsequent cytoplasmic retention of TFEB and TFE3. Indirectly acts as a positive regulator of Wnt signaling by promoting mTOR-dependent cytoplasmic retention of MiT/TFE factor TFE3. Required for the exit of hematopoietic stem cell from pluripotency by promoting mTOR-dependent cytoplasmic retention of TFE3, thereby increasing Wnt signaling. Acts as an inhibitor of browning of adipose tissue by regulating mTOR-dependent cytoplasmic retention of TFE3. Involved in the control of embryonic stem cells differentiation; together with LAMTOR1 it is necessary to recruit and activate RagC/RRAGC and RagD/RRAGD at the lysosomes, and to induce exit of embryonic stem cells from pluripotency via non-canonical, mTOR-independent TFE3 inactivation. In response to flow stress, regulates STK11/LKB1 accumulation and mTORC1 activation through primary cilia: may act by recruiting STK11/LKB1 to primary cilia for activation of AMPK resided at basal bodies, causing mTORC1 down-regulation. Together with FNIP1 and/or FNIP2, regulates autophagy: following phosphorylation by ULK1, interacts with GABARAP and promotes autophagy. Required for starvation-induced perinuclear clustering of lysosomes by promoting association of RILP with its effector RAB34. Regulates glycolysis by binding to lactate dehydrogenase LDHA, acting as an uncompetitive inhibitor. This is Folliculin from Homo sapiens (Human).